A 603-amino-acid polypeptide reads, in one-letter code: Shugoshin (603 aa).

The stretch at 11 to 74 (HIQELQNILD…NVQLRSQVSL (64 aa)) forms a coiled coil. 2 disordered regions span residues 112–164 (ESLP…RSST) and 201–227 (NEIDTNNVNNDNLLSPIPHKKRKSNRR). Composition is skewed to low complexity over residues 146–157 (SVSTGSAHSTSS) and 201–214 (NEIDTNNVNNDNLL). Residues 218 to 227 (PHKKRKSNRR) are compositionally biased toward basic residues. A coiled-coil region spans residues 304–325 (KQDILDETEKRDTAVNQKKKLE). The tract at residues 331 to 399 (PVEELSSSKN…ESVDFDRPRR (69 aa)) is disordered. Residues 362 to 376 (KVKHSMKSRKPKKNK) show a composition bias toward basic residues. Positions 431–451 (NIQDLQVKYKKSKKVLEKELK) form a coiled coil. Positions 455 to 467 (KAMKSPKKNEKTF) are enriched in basic and acidic residues. 2 disordered regions span residues 455–519 (KAMK…HSSF) and 583–603 (HNDTNKSSPKTYRSRSRKNKA). Low complexity predominate over residues 483–512 (RPSSTHSTSSVDAECSHNNSHSENINSSIN). The segment covering 583-593 (HNDTNKSSPKT) has biased composition (polar residues). Residues 594 to 603 (YRSRSRKNKA) are compositionally biased toward basic residues.

Belongs to the shugoshin family.

The protein resides in the nucleus. Its subcellular location is the chromosome. The protein localises to the centromere. Plays a central role in chromosome cohesion during cell division by preventing premature dissociation of cohesin complex from centromeres after prophase, when most of cohesin complex dissociates from chromosomes arms. The chain is Shugoshin (SGO1) from Candida glabrata (strain ATCC 2001 / BCRC 20586 / JCM 3761 / NBRC 0622 / NRRL Y-65 / CBS 138) (Yeast).